Consider the following 1835-residue polypeptide: Urea amidolyase (1835 aa).

Residues 122-129 (GAIIVGKT) and Lys747 each bind ATP. The region spanning 632 to 1075 (LFDTVLIANR…STNILNSYQY (444 aa)) is the Biotin carboxylation domain. Positions 751–948 (RQIAQKAGVP…LVEWMIRIAA (198 aa)) constitute an ATP-grasp domain. Residue Ser803 is modified to Phosphoserine. ATP is bound by residues Glu830 and Asn865. Residues 1754–1832 (DEEEDFPEGA…DSGDIVAVIE (79 aa)) enclose the Biotinyl-binding domain. Lys1798 is subject to N6-biotinyllysine.

Monomer. The cofactor is biotin.

The catalysed reaction is urea + hydrogencarbonate + ATP = urea-1-carboxylate + ADP + phosphate + H(+). The enzyme catalyses urea-1-carboxylate + H2O + 3 H(+) = 2 NH4(+) + 2 CO2. It functions in the pathway nitrogen metabolism; urea degradation; CO(2) and NH(3) from urea (allophanate route): step 1/2. Its pathway is nitrogen metabolism; urea degradation; CO(2) and NH(3) from urea (allophanate route): step 2/2. Its function is as follows. Hydrolysis of urea to ammonia and CO(2). The chain is Urea amidolyase (DUR1,2) from Saccharomyces cerevisiae (strain ATCC 204508 / S288c) (Baker's yeast).